The primary structure comprises 201 residues: FMN-dependent NADH:quinone oxidoreductase (201 aa).

FMN contacts are provided by residues Ser-10, 16–18 (SQS), 96–99 (MYNF), and 140–143 (SRGG).

The protein belongs to the azoreductase type 1 family. Homodimer. FMN serves as cofactor.

The catalysed reaction is 2 a quinone + NADH + H(+) = 2 a 1,4-benzosemiquinone + NAD(+). It carries out the reaction N,N-dimethyl-1,4-phenylenediamine + anthranilate + 2 NAD(+) = 2-(4-dimethylaminophenyl)diazenylbenzoate + 2 NADH + 2 H(+). Its function is as follows. Quinone reductase that provides resistance to thiol-specific stress caused by electrophilic quinones. Functionally, also exhibits azoreductase activity. Catalyzes the reductive cleavage of the azo bond in aromatic azo compounds to the corresponding amines. The protein is FMN-dependent NADH:quinone oxidoreductase of Salmonella choleraesuis (strain SC-B67).